Reading from the N-terminus, the 331-residue chain is MIKKYYESDADLAAVQGKQIAVIGYGSQGRGQALNLRDSGLSVIIGLRPGRSFQQASEDGFEVFPVADAVKKADIIQILLPDESQGAVYKTEIRPYLADKKCLMFSHGFNIHYGQIVPPPNVDVVMVAPKGPGHMVRRTFEEGKGVPALIAIEQDYTGDAQAIALGYAKGIGATRAVVFETTFREETETDLFGEQAVLCGGVTSLIKAGFETLVDAGYAPEMAYLEVLHEMKLIVDMIYEGGFTNMRDSISNTALYGDLTRGPRVIGEDSRIAMEEILEEIQNGEFAREWMLENIVNRPVFTALKRNDEEHLLEEVGAEIRGLMPQFKKNA.

The region spanning 2–181 (IKKYYESDAD…GATRAVVFET (180 aa)) is the KARI N-terminal Rossmann domain. NADP(+) contacts are provided by residues 25 to 28 (YGSQ), arginine 48, serine 52, and 82 to 85 (DESQ). Histidine 107 is an active-site residue. Residue glycine 133 participates in NADP(+) binding. In terms of domain architecture, KARI C-terminal knotted spans 182–327 (TFREETETDL…AEIRGLMPQF (146 aa)). 4 residues coordinate Mg(2+): aspartate 190, glutamate 194, glutamate 226, and glutamate 230. Serine 251 is a binding site for substrate.

Belongs to the ketol-acid reductoisomerase family. Mg(2+) serves as cofactor.

It catalyses the reaction (2R)-2,3-dihydroxy-3-methylbutanoate + NADP(+) = (2S)-2-acetolactate + NADPH + H(+). The catalysed reaction is (2R,3R)-2,3-dihydroxy-3-methylpentanoate + NADP(+) = (S)-2-ethyl-2-hydroxy-3-oxobutanoate + NADPH + H(+). The protein operates within amino-acid biosynthesis; L-isoleucine biosynthesis; L-isoleucine from 2-oxobutanoate: step 2/4. It functions in the pathway amino-acid biosynthesis; L-valine biosynthesis; L-valine from pyruvate: step 2/4. In terms of biological role, involved in the biosynthesis of branched-chain amino acids (BCAA). Catalyzes an alkyl-migration followed by a ketol-acid reduction of (S)-2-acetolactate (S2AL) to yield (R)-2,3-dihydroxy-isovalerate. In the isomerase reaction, S2AL is rearranged via a Mg-dependent methyl migration to produce 3-hydroxy-3-methyl-2-ketobutyrate (HMKB). In the reductase reaction, this 2-ketoacid undergoes a metal-dependent reduction by NADPH to yield (R)-2,3-dihydroxy-isovalerate. The sequence is that of Ketol-acid reductoisomerase (NADP(+)) from Methanosphaerula palustris (strain ATCC BAA-1556 / DSM 19958 / E1-9c).